The chain runs to 358 residues: Metacaspase-3 (358 aa).

The segment at 1–84 (MGFDFGCLLK…APTHVSGTFR (84 aa)) is important for catalytic activity. Residues His168 and Cys223 contribute to the active site.

This sequence belongs to the peptidase C14B family. In terms of processing, in epimastigotes, the unprocessed enzyme appears to be the main form. Auto-processing is dispensable for catalytic activity towards small oligopeptide substrates.

The protein resides in the cytoplasm. The protein localises to the nucleus. With respect to regulation, activated by Ca(2+). In terms of biological role, cysteine protease that cleaves specifically after arginine or lysine residues. In epimastigotes, may play a role in cell cycle G1/S transition. The sequence is that of Metacaspase-3 from Trypanosoma cruzi (strain CL Brener).